The following is a 22-amino-acid chain: Cysteine-rich venom protein notescatin (22 aa).

Residues 1–15 (SNKKDYQKEIVDKHN) are compositionally biased toward basic and acidic residues. Residues 1–22 (SNKKDYQKEIVDKHNALRRSVK) are disordered.

This sequence belongs to the CRISP family. Post-translationally, contains 8 disulfide bonds. Expressed by the venom gland.

The protein resides in the secreted. This is Cysteine-rich venom protein notescatin from Notechis scutatus scutatus (Mainland tiger snake).